The following is a 571-amino-acid chain: CDT1-like protein a, chloroplastic (571 aa).

Residues M1–V79 constitute a chloroplast transit peptide. 2 disordered regions span residues M1–K110 and T288–K315. Residues S22–A38 are compositionally biased toward polar residues. A compositionally biased stretch (low complexity) spans S81–P96. A compositionally biased stretch (polar residues) spans T288 to I302. Residues A303–K315 show a composition bias toward low complexity.

Belongs to the Cdt1 family. Binds to ARC6. Post-translationally, phosphorylated by cyclin D- and cyclin A-containing CDKA-1, and thus targeted to proteasome-mediated proteolysis. As to expression, expressed in proliferating (e.g. shoot and root apical meristems, organ primordia) and endoreplicating cells (e.g. guard cells and stomatal lineage, developing trichomes).

The protein localises to the plastid. Its subcellular location is the chloroplast. Member of the pre-replication complex. Component of the plastid division machinery. Promotes polyloidization and regulates endoreduplication. Involved in the coordination of cell and plastid division. This Arabidopsis thaliana (Mouse-ear cress) protein is CDT1-like protein a, chloroplastic (CDT1A).